Consider the following 470-residue polypeptide: Protein C-ets-2 (470 aa).

In terms of domain architecture, PNT spans 85-170 (ATFSGFKKEQ…EHLEQMIKEN (86 aa)). Position 225 is a phosphoserine (serine 225). Residues 270-291 (ASGKPRDHDSAETGGDSFESSE) are disordered. Residues serine 296, serine 299, and serine 302 each carry the phosphoserine modification. A DNA-binding region (ETS) is located at residues 364 to 444 (IQLWQFLLEL…SGKRYVYRFV (81 aa)).

Belongs to the ETS family. In terms of processing, phosphorylation by CDK10 at Ser-225 may create a phosphodegron that targets ETS2 for proteasomal degradation.

It is found in the nucleus. Its function is as follows. Transcription factor activating transcription. Binds specifically the GGA DNA motif in gene promoters and stimulates transcription of those genes. This chain is Protein C-ets-2 (ETS2), found in Bos taurus (Bovine).